The sequence spans 251 residues: 3-deoxy-manno-octulosonate cytidylyltransferase (251 aa).

Belongs to the KdsB family.

The protein localises to the cytoplasm. The enzyme catalyses 3-deoxy-alpha-D-manno-oct-2-ulosonate + CTP = CMP-3-deoxy-beta-D-manno-octulosonate + diphosphate. Its pathway is nucleotide-sugar biosynthesis; CMP-3-deoxy-D-manno-octulosonate biosynthesis; CMP-3-deoxy-D-manno-octulosonate from 3-deoxy-D-manno-octulosonate and CTP: step 1/1. It functions in the pathway bacterial outer membrane biogenesis; lipopolysaccharide biosynthesis. Activates KDO (a required 8-carbon sugar) for incorporation into bacterial lipopolysaccharide in Gram-negative bacteria. The sequence is that of 3-deoxy-manno-octulosonate cytidylyltransferase from Rhizobium johnstonii (strain DSM 114642 / LMG 32736 / 3841) (Rhizobium leguminosarum bv. viciae).